We begin with the raw amino-acid sequence, 354 residues long: Selenide, water dikinase (354 aa).

Cys-23 is a catalytic residue. Residues Lys-26 and 54-56 (TSD) contribute to the ATP site. Asp-57 contributes to the Mg(2+) binding site. ATP contacts are provided by residues Asp-74, Asp-97, and 145–147 (GHS). Asp-97 provides a ligand contact to Mg(2+). Asp-233 is a binding site for Mg(2+).

It belongs to the selenophosphate synthase 1 family. Class I subfamily. Homodimer. Requires Mg(2+) as cofactor.

The enzyme catalyses hydrogenselenide + ATP + H2O = selenophosphate + AMP + phosphate + 2 H(+). In terms of biological role, synthesizes selenophosphate from selenide and ATP. The sequence is that of Selenide, water dikinase from Burkholderia ambifaria (strain MC40-6).